The following is a 637-amino-acid chain: Conglutin beta 5 (637 aa).

Residues 1-30 (MAKMRVRFPMLVLLLGVVFLLAVSIGIAYG) form the signal peptide. 3 stretches are compositionally biased toward basic and acidic residues: residues 33–105 (DVIK…REQE), 136–174 (RREEREQEQGSSSESRRQSGDERRHRHEKREQREEREQE), and 184–203 (DYGRRQRHEGREQREEREQE). 2 disordered regions span residues 33–221 (DVIK…YFSS) and 384–439 (EQED…LRSN). The Cupin type-1 1 domain occupies 217 to 375 (YYFSSERFQT…TFNTHYEEIQ (159 aa)). Positions 389–417 (EQRREQEQSHQDEGVIVRVSKEQIQELRK) are enriched in basic and acidic residues. The Cupin type-1 2 domain occupies 434–594 (FNLRSNEPIY…IFPGSAEDVE (161 aa)). The N-linked (GlcNAc...) asparagine glycan is linked to Asn544. Positions 606–615 (ANAQPQQQQQ) are enriched in low complexity. The segment at 606 to 626 (ANAQPQQQQQQREKEGRRGRR) is disordered.

It belongs to the 7S seed storage protein family. As to quaternary structure, component of globulins complexes which accumulate in seeds.

Its function is as follows. Seed storage protein. Accumulates during seed development and is hydrolyzed after germination to provide a carbon and nitrogen source for the developing seedling. The polypeptide is Conglutin beta 5 (Lupinus angustifolius (Narrow-leaved blue lupine)).